Reading from the N-terminus, the 803-residue chain is Pesticidal crystal protein Cry13Aa (803 aa).

Belongs to the delta endotoxin family.

Its function is as follows. Endotoxin with nematicidal activity. This Bacillus thuringiensis protein is Pesticidal crystal protein Cry13Aa (cry13Aa).